The sequence spans 62 residues: Large ribosomal subunit protein eL37 (62 aa).

Positions 20, 23, 35, and 38 each coordinate Zn(2+). The C4-type zinc finger occupies 20-38 (CRRCGRRSYHVRKKACSAC).

Belongs to the eukaryotic ribosomal protein eL37 family. It depends on Zn(2+) as a cofactor.

Binds to the 23S rRNA. The polypeptide is Large ribosomal subunit protein eL37 (Methanococcus aeolicus (strain ATCC BAA-1280 / DSM 17508 / OCM 812 / Nankai-3)).